The following is an 819-amino-acid chain: Lysine-specific demethylase JMJ18 (819 aa).

The disordered stretch occupies residues 1 to 39; that stretch reads MENPPLESEIKEDMSLKNHPPDKDKDKDTIMEQPSSPRH. Residues 8–30 show a composition bias toward basic and acidic residues; it reads SEIKEDMSLKNHPPDKDKDKDTI. Residues 59-100 enclose the JmjN domain; the sequence is APVFTPSLEEFVDPLAYIEKIRPLAEPYGICRIIPPSTWKPP. Residues 120 to 171 are disordered; that stretch reads TVDLLQNREPMKKKPKSRKRKRRRNSRMGSSKRRSGSSPAESTSSPEAEEKF. Residues 130–137 carry the Nuclear localization signal motif; it reads MKKKPKSR. The span at 130–154 shows a compositional bias: basic residues; it reads MKKKPKSRKRKRRRNSRMGSSKRRS. The span at 155–165 shows a compositional bias: low complexity; sequence GSSPAESTSSP. One can recognise a JmjC domain in the interval 261-427; sequence QYTLSGWNLN…HGQNAVELYS (167 aa). 3 residues coordinate Fe cation: histidine 307, glutamate 309, and histidine 395. Zn(2+)-binding residues include cysteine 519, cysteine 522, cysteine 533, cysteine 535, cysteine 542, histidine 545, cysteine 550, and cysteine 552. The C5HC2 zinc finger occupies 519-571; that stretch reads CFSCFYDLHLSASGCKCSPEEYACLKHADDLCSCDVKDGFILLRYTMDELSSL. Positions 644–702 constitute an FYR N-terminal domain; the sequence is ASENLGVSVEPINLGFLIFGKLWCNKYAIFPKGFRSRVKFYNVLDPTRMSNYISEVLDA. In terms of domain architecture, FYR C-terminal spans 704–788; the sequence is LMGPLFRVTL…HRLVEYWNHK (85 aa).

This sequence belongs to the JARID1 histone demethylase family. Requires Fe(2+) as cofactor. As to expression, expressed in vascular tissues of roots, cotyledons, leaves and flowers. Expressed predominantly in phloem companion cells of roots. Present in inflorescences, roots, siliques, leaves and stems.

It localises to the nucleus. The catalysed reaction is N(6),N(6),N(6)-trimethyl-L-lysyl(4)-[histone H3] + 2-oxoglutarate + O2 = N(6),N(6)-dimethyl-L-lysyl(4)-[histone H3] + formaldehyde + succinate + CO2. It carries out the reaction N(6),N(6)-dimethyl-L-lysyl(4)-[histone H3] + 2-oxoglutarate + O2 = N(6)-methyl-L-lysyl(4)-[histone H3] + formaldehyde + succinate + CO2. In terms of biological role, histone demethylase that demethylates 'Lys-4' (H3K4me) of histone H3 with a specific activity for H3K4me3 and H3K4me2. No activity on H3K9me3/2, H3K27me3/2 and H3K36me3/2. Involved in the control of flowering time by demethylating H3K4me3 at the FLC locus and repressing its expression. The repression of FLC level and reduction in H3K4me3 at the FLC locus results in induction of the flowering activator FT, which is a downstream target of FLC. The sequence is that of Lysine-specific demethylase JMJ18 from Arabidopsis thaliana (Mouse-ear cress).